Consider the following 179-residue polypeptide: DELTA-actitoxin-Afr1a (179 aa).

The segment at 1–29 (SADVAGAVIDGAGLGFDVLKTVLEALGNV) is N-terminal alpha-helix that contributes to the pore. Position 31 (arginine 31) interacts with an N-(acyl)-sphingosylphosphocholine. 2 residues coordinate N-acetyl-D-glucosamine 6-sulfate: tyrosine 51 and arginine 53. 13 residues coordinate an N-(acyl)-sphingosylphosphocholine: arginine 53, serine 54, arginine 79, glycine 85, tyrosine 108, tyrosine 113, serine 114, tryptophan 116, tyrosine 133, tyrosine 137, tyrosine 138, arginine 144, and glycine 168. The tract at residues 105 to 120 (SVPYDYNWYSNWWNVR) is trp-rich region, which is important for the binding to lipid membrane. Tyrosine 138 serves as a coordination point for N-acetyl-D-glucosamine 6-sulfate. A Cell attachment site, crucial for protein stability motif is present at residues 144–146 (RGD).

Belongs to the actinoporin family. Sea anemone subfamily. As to quaternary structure, octamer or nonamer in membranes. Monomer in the soluble state.

Its subcellular location is the secreted. It localises to the nematocyst. The protein resides in the target cell membrane. Its function is as follows. Pore-forming toxin (PFT) that consists of a crown-shaped octamer or nonamer that forms cation-selective hydrophilic pores of about 1.5 nm (inside) and 13 nm (outside). It causes cardiac stimulation and cytolysis (EC(50)=1.6 nM on erythrocytes). Interestingly, the Phe-16 is crucial for hemolysis. Pore formation is a multi-step process that involves specific recognition of membrane sphingomyelin (but neither cholesterol nor phosphatidylcholine) using aromatic rich region and adjacent phosphocholine (POC) binding site, firm binding to the membrane (mainly driven by hydrophobic interactions) accompanied by the transfer of the N-terminal region to the lipid-water interface and finally pore formation after oligomerization of monomers. It is probable that a dimeric form is an assembly intermediate before the complete oligomerization. The formation of stable pores occurs only in vesicles composed of DOPC/SM (there is no oligomerization when the PFT is treated with vesicles of DOPC or SM alone). The transmembrane pore displays 8 lateral perforations, one at each subunit-subunit interface, partially occupied by the acyl-chain region of a bridging lipid. Each pore contains 24 lipid molecules, firmly bound to each subunit, that is, 3 lipids (L1, L2, L3, L4 and/or L5) are associated to each subunit. Lipid L1 bridges 2 subunits, whereas lipids L2 and L3 bind to sites at single subunit. The chain is DELTA-actitoxin-Afr1a from Actinia fragacea (Strawberry anemone).